The chain runs to 474 residues: Protein FAM161A (474 aa).

3 disordered regions span residues 78–126 (SSSS…PGEI), 185–210 (QKRR…DDAE), and 308–364 (REEL…DQGL). Positions 188 to 250 (REKASDAQET…KKTRERSKAA (63 aa)) form a coiled coil. A required for interaction with CFAP418 region spans residues 274 to 454 (KLRELCRAKK…PTASSRGREQ (181 aa)). Residues 325–335 (LQSSPWPSHST) are compositionally biased toward polar residues. Residues Lys-397 and Lys-413 each participate in a glycyl lysine isopeptide (Lys-Gly) (interchain with G-Cter in SUMO2) cross-link. Residues 412–474 (LKETRRPNPS…KELARIGGAR (63 aa)) form a disordered region. Residues 422–431 (PRHKSPRRSA) are compositionally biased toward basic residues. Positions 450 to 468 (RGREQAIRRSEKARMKELA) are enriched in basic and acidic residues.

This sequence belongs to the FAM161 family. Interacts (via central region) with CFAP418 (via N-terminus); the interaction is direct. Interacts (via C-terminus) with microtubules. Interacts with LCA5. Interacts with CEP290. Interacts with SDCCAG8. Interacts with FAM161B. Interacts with POC1B. Interacts with CEP78. Forms a microtubule-associated complex with POC5, CETN2 and POC1B. Interacts with CCDC15. As to expression, expressed in the retina and kidney.

The protein resides in the cytoplasm. Its subcellular location is the cytoskeleton. The protein localises to the cilium basal body. It is found in the cell projection. It localises to the cilium. The protein resides in the microtubule organizing center. Its subcellular location is the centrosome. The protein localises to the centriole. Involved in ciliogenesis. This is Protein FAM161A from Rattus norvegicus (Rat).